A 495-amino-acid chain; its full sequence is Probable cytosol aminopeptidase (495 aa).

Mn(2+)-binding residues include lysine 267 and aspartate 272. Residue lysine 279 is part of the active site. Residues aspartate 290, aspartate 349, and glutamate 351 each coordinate Mn(2+). Arginine 353 is a catalytic residue.

It belongs to the peptidase M17 family. Requires Mn(2+) as cofactor.

Its subcellular location is the cytoplasm. The catalysed reaction is Release of an N-terminal amino acid, Xaa-|-Yaa-, in which Xaa is preferably Leu, but may be other amino acids including Pro although not Arg or Lys, and Yaa may be Pro. Amino acid amides and methyl esters are also readily hydrolyzed, but rates on arylamides are exceedingly low.. The enzyme catalyses Release of an N-terminal amino acid, preferentially leucine, but not glutamic or aspartic acids.. Functionally, presumably involved in the processing and regular turnover of intracellular proteins. Catalyzes the removal of unsubstituted N-terminal amino acids from various peptides. The polypeptide is Probable cytosol aminopeptidase (Histophilus somni (strain 129Pt) (Haemophilus somnus)).